The following is a 2005-amino-acid chain: Sodium channel protein type 2 subunit alpha (2005 aa).

The Cytoplasmic segment spans residues 1–129; that stretch reads MARSVLVPPG…KLAIKILVHS (129 aa). A Phosphoserine modification is found at serine 4. Positions 28-61 are disordered; that stretch reads RIAEEKAKRPKQERKDEDDENGPKPNSDLEAGKS. A Glycyl lysine isopeptide (Lys-Gly) (interchain with G-Cter in SUMO1) cross-link involves residue lysine 38. The I repeat unit spans residues 111-456; it reads ILTPFNPIRK…QQMLEQLKKQ (346 aa). Residues 130 to 148 traverse the membrane as a helical segment; the sequence is LFNVLIMCTILTNCVFMTM. Residues 149–155 lie on the Extracellular side of the membrane; it reads SNPPDWT. Residues 156–176 traverse the membrane as a helical segment; sequence KNVEYTFTGIYTFESLIKILA. Residues 177-190 are Cytoplasmic-facing; sequence RGFCLEDFTFLRNP. Residues 191-208 traverse the membrane as a helical segment; the sequence is WNWLDFTVITFAYVTEFV. At 209–214 the chain is on the extracellular side; it reads NLGNVS. N-linked (GlcNAc...) asparagine glycosylation is present at asparagine 212. A helical membrane pass occupies residues 215 to 231; that stretch reads ALRTFRVLRALKTISVI. Residues 232–250 are Cytoplasmic-facing; it reads PGLKTIVGALIQSVKKLSD. Residues 251–270 traverse the membrane as a helical segment; that stretch reads VMILTVFCLSVFALIGLQLF. The Extracellular segment spans residues 271–369; the sequence is MGNLRNKCLQ…PNYGYTSFDT (99 aa). Cysteine 278 and cysteine 338 are disulfide-bonded. N-linked (GlcNAc...) asparagine glycans are attached at residues asparagine 285, asparagine 291, asparagine 297, asparagine 303, asparagine 308, and asparagine 340. The segment at residues 370–394 is an intramembrane region (pore-forming); that stretch reads FSWAFLSLFRLMTQDFWENLYQLTL. Over 395–401 the chain is Extracellular; the sequence is RAAGKTY. Residues 402 to 422 traverse the membrane as a helical segment; it reads MIFFVLVIFLGSFYLINLILA. Over 423-759 the chain is Cytoplasmic; the sequence is VVAMAYEEQN…HVVNLVVMDP (337 aa). Phosphoserine is present on residues serine 468, serine 471, serine 484, serine 526, serine 528, serine 531, serine 553, serine 554, and serine 558. Residues 494–529 are disordered; sequence SSKSEKELKNRRKKKKQKEQAGEEEKEDAVRKSASE. Over residues 511–529 the composition is skewed to basic and acidic residues; sequence KEQAGEEEKEDAVRKSASE. Phosphoserine; by PKC; in vitro is present on serine 554. 2 positions are modified to phosphoserine; by PKC; in vitro: serine 573 and serine 576. Phosphoserine is present on residues serine 589, serine 610, serine 623, serine 687, serine 688, and serine 721. Residues 591–634 form a disordered region; the sequence is NDFADDEHSTFEDNDSRRDSLFVPHRHGERRPSNVSQASRASRG. Over residues 596–610 the composition is skewed to basic and acidic residues; the sequence is DEHSTFEDNDSRRDS. An II repeat occupies 741–1013; that stretch reads CCKPWLKVKH…QIAVGRMQKG (273 aa). The helical transmembrane segment at 760–778 threads the bilayer; the sequence is FVDLAITICIVLNTLFMAM. The Extracellular portion of the chain corresponds to 779-789; it reads EHYPMTEQFSS. The chain crosses the membrane as a helical span at residues 790–809; the sequence is VLSVGNLVFTGIFTAEMFLK. Residues 810–823 are Cytoplasmic-facing; the sequence is IIAMDPYYYFQEGW. Residues 824–843 form a helical membrane-spanning segment; sequence NIFDGFIVSLSLMELGLANV. Topologically, residues 844–845 are extracellular; the sequence is EG. The helical transmembrane segment at 846-863 threads the bilayer; that stretch reads LSVLRSFRLLRVFKLAKS. The Cytoplasmic segment spans residues 864–879; it reads WPTLNMLIKIIGNSVG. Residues 880–898 traverse the membrane as a helical segment; sequence ALGNLTLVLAIIVFIFAVV. At 899-927 the chain is on the extracellular side; that stretch reads GMQLFGKSYKECVCKISNDCELPRWHMHH. Cysteine 912 and cysteine 918 are joined by a disulfide. Positions 917–918 are binds SCN2B; sequence DC. The segment at residues 928–948 is an intramembrane region (pore-forming); the sequence is FFHSFLIVFRVLCGEWIETMW. At 949–961 the chain is on the extracellular side; sequence DCMEVAGQTMCLT. An intrachain disulfide couples cysteine 950 to cysteine 959. A helical transmembrane segment spans residues 962–982; sequence VFMMVMVIGNLVVLNLFLALL. The Cytoplasmic segment spans residues 983-1209; it reads LSSFSSDNLA…TCYKIVEHNW (227 aa). Residues 1120–1166 are disordered; the sequence is EEFSSESDMEESKEKLNATSSSEGSTVDIGAPAEGEQPEAEPEESLE. The span at 1155-1166 shows a compositional bias: acidic residues; that stretch reads EQPEAEPEESLE. An III repeat occupies 1190-1504; sequence KGKLWWNLRK…KKYYNAMKKL (315 aa). Residues 1210 to 1227 form a helical membrane-spanning segment; that stretch reads FETFIVFMILLSSGALAF. Residues 1228 to 1240 are Extracellular-facing; it reads EDIYIEQRKTIKT. The chain crosses the membrane as a helical span at residues 1241–1259; that stretch reads MLEYADKVFTYIFILEMLL. Residues 1260 to 1273 lie on the Cytoplasmic side of the membrane; that stretch reads KWVAYGFQMYFTNA. A helical transmembrane segment spans residues 1274–1292; it reads WCWLDFLIVDVSLVSLTAN. Residues 1293–1300 lie on the Extracellular side of the membrane; that stretch reads ALGYSELG. A helical membrane pass occupies residues 1301 to 1319; it reads AIKSLRTLRALRPLRALSR. The Cytoplasmic segment spans residues 1320 to 1336; sequence FEGMRVVVNALLGAIPS. A helical membrane pass occupies residues 1337 to 1356; sequence IMNVLLVCLIFWLIFSIMGV. Topologically, residues 1357 to 1408 are extracellular; sequence NLFAGKFYHCINYTTGEMFDVSVVNNYSECQALIESNQTARWKNVKVNFDNV. Cysteine 1366 and cysteine 1386 are joined by a disulfide. N-linked (GlcNAc...) asparagine glycosylation is found at asparagine 1368, asparagine 1382, and asparagine 1393. Positions 1409–1430 form an intramembrane region, pore-forming; sequence GLGYLSLLQVATFKGWMDIMYA. Over 1431–1447 the chain is Extracellular; sequence AVDSRNVELQPKYEDNL. A helical membrane pass occupies residues 1448–1469; sequence YMYLYFVIFIIFGSFFTLNLFI. At 1470–1532 the chain is on the cytoplasmic side; the sequence is GVIIDNFNQQ…MVFDFVTKQV (63 aa). Phosphoserine; by PKC is present on serine 1506. The stretch at 1513–1811 is one IV repeat; the sequence is IPRPANKFQG…WEKFDPDATQ (299 aa). Residues 1533 to 1550 form a helical membrane-spanning segment; sequence FDISIMILICLNMVTMMV. Over 1551–1561 the chain is Extracellular; that stretch reads ETDDQSQEMTN. Residues 1562–1580 traverse the membrane as a helical segment; it reads ILYWINLVFIVLFTGECVL. Residues 1581–1592 are Cytoplasmic-facing; the sequence is KLISLRHYYFTI. Residues 1593–1610 traverse the membrane as a helical segment; the sequence is GWNIFDFVVVILSIVGMF. Residues 1611–1623 lie on the Extracellular side of the membrane; that stretch reads LAELIEKYFVSPT. A helical membrane pass occupies residues 1624–1640; sequence LFRVIRLARIGRILRLI. At 1641–1659 the chain is on the cytoplasmic side; that stretch reads KGAKGIRTLLFALMMSLPA. The chain crosses the membrane as a helical span at residues 1660-1677; the sequence is LFNIGLLLFLVMFIYAIF. At 1678-1699 the chain is on the extracellular side; it reads GMSNFAYVKREVGIDDMFNFET. The segment at residues 1700–1722 is an intramembrane region (pore-forming); that stretch reads FGNSMICLFQITTSAGWDGLLAP. The Extracellular segment spans residues 1723–1752; the sequence is ILNSGPPDCDPEKDHPGSSVKGDCGNPSVG. Cysteines 1731 and 1746 form a disulfide. The helical transmembrane segment at 1753–1775 threads the bilayer; it reads IFFFVSYIIISFLVVVNMYIAVI. Residues 1776 to 2005 lie on the Cytoplasmic side of the membrane; the sequence is LENFSVATEE…KGKDIRESKK (230 aa). An IQ domain is found at 1905 to 1934; it reads EEVSAIVIQRAYRRYLLKQKVKKVSSIYKK. Serine 1930 is modified (phosphoserine). The span at 1933–1964 shows a compositional bias: basic and acidic residues; the sequence is KKDKGKEDEGTPIKEDIITDKLNENSTPEKTD. The tract at residues 1933 to 2005 is disordered; it reads KKDKGKEDEG…KGKDIRESKK (73 aa). A phosphothreonine mark is found at threonine 1943, threonine 1963, and threonine 1966. Serine 1971 carries the post-translational modification Phosphoserine. The segment covering 1979–2005 has biased composition (basic and acidic residues); the sequence is TKPEKEKFEKDKSEKEDKGKDIRESKK.

Belongs to the sodium channel (TC 1.A.1.10) family. Nav1.2/SCN2A subfamily. Heterooligomer of a large alpha subunit and a smaller beta subunit. Heterooligomer with SCN2B or SCN4B; disulfide-linked. Heterooligomer with SCN1B or SCN3B; non-covalently linked. Interacts with NEDD4L. Interacts with CALM. Interacts with TMEM233. Interacts with the conotoxin GVIIJ. Interacts with the scorpion toxin BMK M1. May be ubiquitinated by NEDD4L; which would promote its endocytosis. Post-translationally, phosphorylation at Ser-1506 by PKC in a highly conserved cytoplasmic loop slows inactivation of the sodium channel and reduces peak sodium currents. In terms of processing, sumoylated at Lys-38. Sumoylation is induced by hypoxia, increases voltage-gated sodium current and mediates the early response to acute hypoxia in neurons. Sumoylated SCN2A is located at the cell membrane. In terms of tissue distribution, expressed in brain (at protein level). Expressed in cerebellar granule neurons (at protein level).

It is found in the cell membrane. The enzyme catalyses Na(+)(in) = Na(+)(out). Functionally, mediates the voltage-dependent sodium ion permeability of excitable membranes. Assuming opened or closed conformations in response to the voltage difference across the membrane, the protein forms a sodium-selective channel through which Na(+) ions may pass in accordance with their electrochemical gradient. Implicated in the regulation of hippocampal replay occurring within sharp wave ripples (SPW-R) important for memory. The sequence is that of Sodium channel protein type 2 subunit alpha from Rattus norvegicus (Rat).